The primary structure comprises 368 residues: Phosphoserine aminotransferase (368 aa).

L-glutamate is bound at residue R44. Residues 78–79 (AT), W104, T157, D179, and Q202 each bind pyridoxal 5'-phosphate. Position 203 is an N6-(pyridoxal phosphate)lysine (K203). Residue 244-245 (NT) participates in pyridoxal 5'-phosphate binding.

This sequence belongs to the class-V pyridoxal-phosphate-dependent aminotransferase family. SerC subfamily. Homodimer. Pyridoxal 5'-phosphate serves as cofactor.

Its subcellular location is the cytoplasm. It catalyses the reaction O-phospho-L-serine + 2-oxoglutarate = 3-phosphooxypyruvate + L-glutamate. It carries out the reaction 4-(phosphooxy)-L-threonine + 2-oxoglutarate = (R)-3-hydroxy-2-oxo-4-phosphooxybutanoate + L-glutamate. It participates in amino-acid biosynthesis; L-serine biosynthesis; L-serine from 3-phospho-D-glycerate: step 2/3. Its pathway is cofactor biosynthesis; pyridoxine 5'-phosphate biosynthesis; pyridoxine 5'-phosphate from D-erythrose 4-phosphate: step 3/5. Catalyzes the reversible conversion of 3-phosphohydroxypyruvate to phosphoserine and of 3-hydroxy-2-oxo-4-phosphonooxybutanoate to phosphohydroxythreonine. In Neisseria meningitidis serogroup A / serotype 4A (strain DSM 15465 / Z2491), this protein is Phosphoserine aminotransferase.